Consider the following 108-residue polypeptide: Large ribosomal subunit protein uL24 (108 aa).

This sequence belongs to the universal ribosomal protein uL24 family. In terms of assembly, part of the 50S ribosomal subunit.

In terms of biological role, one of two assembly initiator proteins, it binds directly to the 5'-end of the 23S rRNA, where it nucleates assembly of the 50S subunit. Functionally, one of the proteins that surrounds the polypeptide exit tunnel on the outside of the subunit. The sequence is that of Large ribosomal subunit protein uL24 from Citrifermentans bemidjiense (strain ATCC BAA-1014 / DSM 16622 / JCM 12645 / Bem) (Geobacter bemidjiensis).